The following is a 94-amino-acid chain: Cell division protein FtsB (94 aa).

The Cytoplasmic portion of the chain corresponds to 1–3; it reads MRV. The helical transmembrane segment at 4-21 threads the bilayer; the sequence is FALTLSLLLVWLLYTLMW. The Periplasmic segment spans residues 22–94; sequence GKNGVMDFRA…YRIIGEESRQ (73 aa). A coiled-coil region spans residues 33-76; sequence QAEIEVQQQVNANLHLRNQEMFAEIDDLRQGLDAIEERARNELG.

The protein belongs to the FtsB family. As to quaternary structure, part of a complex composed of FtsB, FtsL and FtsQ.

Its subcellular location is the cell inner membrane. Functionally, essential cell division protein. May link together the upstream cell division proteins, which are predominantly cytoplasmic, with the downstream cell division proteins, which are predominantly periplasmic. This Vibrio cholerae serotype O1 (strain ATCC 39315 / El Tor Inaba N16961) protein is Cell division protein FtsB.